The following is a 593-amino-acid chain: Solute carrier family 40 member 3, chloroplastic (593 aa).

The disordered stretch occupies residues 1–23 (MSMSKLLSPPPTSPPGPALSRLP). The transit peptide at 1–51 (MSMSKLLSPPPTSPPGPALSRLPCRRVAPPPVLPFPFPLRRLTSRRVFATS) directs the protein to the chloroplast. Residues 8–17 (SPPPTSPPGP) show a composition bias toward pro residues. 11 helical membrane passes run 181 to 201 (ILPVAVLGFFTKLVVFAAGPL), 219 to 239 (AAIQTAAHLVSVATITYAFAV), 253 to 273 (FAVLVASTAVDRLACVALGII), 303 to 322 (LLCETVGASIFALLLSKNNP), 323 to 343 (LTCIKLSCVISLCALPLLIFL), 403 to 423 (YVFVCFNVALAPGALMTTFLI), 431 to 451 (VIGAFGGSSGAVGILATFATA), 462 to 482 (AGAAGLIAQSALLGAAVVVYL), 493 to 513 (LFAFLGLIVASRAGHMAYSAI), 530 to 550 (IGATEIAVASLAELAMMAVAV), and 557 to 577 (HFGALAALSATAVTAAAGMYC).

The protein belongs to the ferroportin (FP) (TC 2.A.100) family. SLC40A subfamily.

The protein localises to the membrane. It localises to the plastid. The protein resides in the chloroplast envelope. In terms of biological role, may be involved in iron transport and iron homeostasis. The sequence is that of Solute carrier family 40 member 3, chloroplastic from Oryza sativa subsp. japonica (Rice).